Reading from the N-terminus, the 201-residue chain is Dephospho-CoA kinase (201 aa).

In terms of domain architecture, DPCK spans 4 to 201; it reads SVGLTGNIAS…KYLREAKIKQ (198 aa). 12–17 contributes to the ATP binding site; the sequence is ASGKST.

This sequence belongs to the CoaE family.

The protein localises to the cytoplasm. It carries out the reaction 3'-dephospho-CoA + ATP = ADP + CoA + H(+). The protein operates within cofactor biosynthesis; coenzyme A biosynthesis; CoA from (R)-pantothenate: step 5/5. Functionally, catalyzes the phosphorylation of the 3'-hydroxyl group of dephosphocoenzyme A to form coenzyme A. This Legionella pneumophila (strain Paris) protein is Dephospho-CoA kinase.